The primary structure comprises 387 residues: DNA double-strand break repair protein Mre11 (387 aa).

The Mn(2+) site is built by D9, H11, D50, and N85. H86 functions as the Proton donor in the catalytic mechanism. Residues H150, D181, and H183 each coordinate Mn(2+). A disordered region spans residues 365–387 (AVLDDDADAADDDGRPTTVEEFQ). Acidic residues predominate over residues 366-375 (VLDDDADAAD).

The protein belongs to the MRE11/RAD32 family. As to quaternary structure, homodimer. Forms a heterotetramer composed of two Mre11 subunits and two Rad50 subunits. It depends on Mn(2+) as a cofactor.

Nuclease activity is regulated by Rad50. Part of the Rad50/Mre11 complex, which is involved in the early steps of DNA double-strand break (DSB) repair. Mre11 binds to DSB ends and has both double-stranded 3'-5' exonuclease activity and single-stranded endonuclease activity. This is DNA double-strand break repair protein Mre11 from Halobacterium salinarum (strain ATCC 700922 / JCM 11081 / NRC-1) (Halobacterium halobium).